Here is a 319-residue protein sequence, read N- to C-terminus: Secreted effector protein sopD2 (319 aa).

Positions W37 to F44 match the Required to target late endocytic compartments motif.

It belongs to the SopD family.

It localises to the secreted. Its subcellular location is the host cell membrane. Functionally, effector proteins function to alter host cell physiology and promote bacterial survival in host tissues. Contributes to the formation of Salmonella-induced filaments (Sifs) in infected epithelial cells and to replication in macrophages. This Salmonella typhimurium (strain LT2 / SGSC1412 / ATCC 700720) protein is Secreted effector protein sopD2 (sopD2).